The chain runs to 583 residues: Trehalase (583 aa).

A signal peptide spans Met-1–Ala-23. Asn-78 is a glycosylation site (N-linked (GlcNAc...) asparagine). Substrate is bound by residues Arg-168, Trp-175 to Asp-176, Asn-212, and Arg-221 to Gln-223. N-linked (GlcNAc...) asparagine glycans are attached at residues Asn-239 and Asn-261. Residues Arg-286 to Glu-288 and Gly-319 each bind substrate. The active-site Proton donor/acceptor is Asp-321. Asn-369 is a glycosylation site (N-linked (GlcNAc...) asparagine). The Proton donor/acceptor role is filled by Glu-514. Glu-529 lines the substrate pocket. Residue Ser-556 is the site of GPI-anchor amidated serine attachment. Positions Gly-557 to Trp-583 are cleaved as a propeptide — removed in mature form.

The protein belongs to the glycosyl hydrolase 37 family. Homodimer; disulfide-linked. In terms of tissue distribution, expressed in kidney, liver and small intestine. Also more weakly expressed in pancreas.

The protein localises to the cell membrane. It carries out the reaction alpha,alpha-trehalose + H2O = alpha-D-glucose + beta-D-glucose. In terms of biological role, intestinal trehalase is probably involved in the hydrolysis of ingested trehalose. This is Trehalase from Homo sapiens (Human).